The following is a 542-amino-acid chain: Glucans biosynthesis protein D (542 aa).

A signal peptide (tat-type signal) is located at residues 1-31; sequence MHRRNLLKASMAIAAYTGLSATGLLASRAWA.

It belongs to the OpgD/OpgG family. In terms of processing, predicted to be exported by the Tat system. The position of the signal peptide cleavage has not been experimentally proven.

It is found in the periplasm. The protein operates within glycan metabolism; osmoregulated periplasmic glucan (OPG) biosynthesis. In terms of biological role, probably involved in the control of the structural glucose backbone of osmoregulated periplasmic glucans (OPGs). The sequence is that of Glucans biosynthesis protein D from Pseudomonas fluorescens (strain Pf0-1).